Consider the following 335-residue polypeptide: Phospholipid scramblase 1 (335 aa).

Positions 1–101 are proline-rich domain (PRD); the sequence is MEKHGPPEHA…NHPGGPGGTP (101 aa). The disordered stretch occupies residues 1-102; it reads MEKHGPPEHA…HPGGPGGTPW (102 aa). Residues 1–305 lie on the Cytoplasmic side of the membrane; the sequence is MEKHGPPEHA…IQFPLDLDVK (305 aa). 6 repeat units span residues 23–29, 30–36, 37–43, 44–50, 51–57, and 58–64. The segment at 23–71 is 7 X 7 AA tandem repeats of Q-G-P-Y-[AP]-G-P; that stretch reads QGPYPGPQGPYPGPQGPYAGPQGPYPGPQGPYAGPQGPYPGPQPGYPVP. The segment covering 26 to 37 has biased composition (pro residues); the sequence is YPGPQGPYPGPQ. A compositionally biased stretch (pro residues) spans 59-72; sequence GPYPGPQPGYPVPP. The short motif at 64 to 72 is the SH3-binding 1 element; sequence PQPGYPVPP. The 7; approximate repeat unit spans residues 65–71; sequence QPGYPVP. The residue at position 91 (Y91) is a Phosphotyrosine; by ABL. Residues 101–109 carry the SH3-binding 2 motif; the sequence is PWMQAPPPP. Position 178 is a phosphothreonine; by PKC/PRKCD (T178). 4 S-palmitoyl cysteine lipidation sites follow: C201, C202, C205, and C206. The Nuclear localization signal motif lies at 274–283; it reads GKISKQWSGF. A helical transmembrane segment spans residues 306–322; it reads MKAVMLGACFLIDFMFF. Residues 323-335 lie on the Extracellular side of the membrane; the sequence is ERTGNEEQRSGVW.

The protein belongs to the phospholipid scramblase family. As to quaternary structure, forms homooligomers in the presence of calcium. Interacts with ABL. Interacts with RELT, RELL1 and RELL2. Interacts with OXSR1 in the presence of RELT. Interacts with OCLN, TOP2A and TOP2B. Interacts with TRPC1, TRPC4 and TRPC5. Interacts with ILDR1. The cofactor is Ca(2+). Mg(2+) serves as cofactor. Requires Zn(2+) as cofactor. Post-translationally, phosphorylated on tyrosine residues. Phosphorylated by OXSR1 in the presence of RELT. Phosphorylation at Thr-178 by PKC/PKCD increases its phospholipid scramblase activity during both cell stimulation and apoptosis. In terms of processing, palmitoylation is required for its phospholipid scramblase activity. Palmitoylation regulates its localization to the cell membrane or the nucleus; trafficking to the cell membrane is dependent upon palmitoylation whereas in the absence of palmitoylation, localizes to the nucleus.

It is found in the cell membrane. The protein localises to the nucleus. It localises to the cytoplasm. The protein resides in the perinuclear region. The enzyme catalyses a 1,2-diacyl-sn-glycero-3-phosphocholine(in) = a 1,2-diacyl-sn-glycero-3-phosphocholine(out). It catalyses the reaction a 1,2-diacyl-sn-glycero-3-phosphoethanolamine(in) = a 1,2-diacyl-sn-glycero-3-phosphoethanolamine(out). It carries out the reaction a 1,2-diacyl-sn-glycero-3-phospho-L-serine(in) = a 1,2-diacyl-sn-glycero-3-phospho-L-serine(out). In terms of biological role, catalyzes calcium-induced ATP-independent rapid bidirectional and non-specific distribution of phospholipids (lipid scrambling or lipid flip-flop) between the inner and outer leaflet of the plasma membrane resulting in collapse of the phospholipid asymmetry which leads to phosphatidylserine externalization on the cell surface. Mediates calcium-dependent phosphatidylserine externalization and apoptosis in neurons via its association with TRPC5. Also exhibits magnesium-dependent nuclease activity against double-stranded DNA and RNA but not single-stranded DNA and can enhance DNA decatenation mediated by TOP2A. Negatively regulates FcR-mediated phagocytosis in differentiated macrophages. May contribute to cytokine-regulated cell proliferation and differentiation. This Rattus norvegicus (Rat) protein is Phospholipid scramblase 1 (Plscr1).